Reading from the N-terminus, the 59-residue chain is Embryonic testis differentiation protein homolog C (59 aa).

A disordered region spans residues 1 to 22; that stretch reads MDKELPKASPSEPALNIKKSGK.

In Homo sapiens (Human), this protein is Embryonic testis differentiation protein homolog C.